Reading from the N-terminus, the 828-residue chain is MAGRGWGALWVCVAAATLLHAGGLARADCWLIEGDKGFVWLAICSQNQPPYEAIPQQINSTIVDLRLNENRIRSVQYASLSRFGNLTYLNLTKNEIGYIEDGAFSGQFNLQVLQLGYNRLRNLTEGMLRGLGKLEYLYLQANLIEVVMASSFWECPNIVNIDLSMNRIQQLNSGTFAGLAKLSVCELYSNPFYCSCELLGFLRWLAAFTNATQTYDRMQCESPPVYSGYYLLGQGRRGHRSILSKLQSVCTEDSYAAEVVGPPRPASGRSQPGRSPPPPPPPEPSDMPCADDECFSGDGTTPLVALPTLATQAEARPLIKVKQLTQNSATITVQLPSPFHRMYTLEHFNNSKASTVSRLTKAQEEIRLTNLFTLTNYTYCVVSTSAGLRHNHTCLTICLPRLPSPPGPVPSPSTATHYIMTILGCLFGMVLVLGAVYYCLRRRRRQEEKHKKAASAAAAGSLKKTIIELKYGPELEAPGLAPLSQGPLLGPEAVTRIPYLPAAGEVEQYKLVESADTPKASKGSYMEVRTGDPPERRDCELGRPGPDSQSSVAEISTIAKEVDKVNQIINNCIDALKSESTSFQGVKSGPVSVAEPPLVLLSEPLAAKHGFLAPGYKDAFGHSLQRHHSVEAAGPPRASTSSSGSVRSPRAFRAEAVGVHKAAAAEAKYIEKGSPAADAILTVTPAAAVLRAEAEKGRQYGEHRHSYPGSHPAEPPAPPGPPPPPPHEGLGRKASILEPLTRPRPRDLAYSQLSPQYHSLSYSSSPEYTCRASQSIWERFRLSRRRHKEEEEFMAAGHALRKKVQFAKDEDLHDILDYWKGVSAQHKS.

Positions 1–27 (MAGRGWGALWVCVAAATLLHAGGLARA) are cleaved as a signal peptide. The Extracellular segment spans residues 28–418 (DCWLIEGDKG…VPSPSTATHY (391 aa)). A glycan (N-linked (GlcNAc...) asparagine) is linked at Asn59. 5 LRR repeats span residues 61–82 (TIVD…SLSR), 85–106 (NLTY…AFSG), 109–130 (NLQV…MLRG), 133–154 (KLEY…SFWE), and 157–178 (NIVN…TFAG). N-linked (GlcNAc...) asparagine glycans are attached at residues Asn85, Asn90, and Asn122. An LRRCT domain is found at 190–252 (NPFYCSCELL…LSKLQSVCTE (63 aa)). Asn210 carries N-linked (GlcNAc...) asparagine glycosylation. Residues 259–291 (VVGPPRPASGRSQPGRSPPPPPPPEPSDMPCAD) form a disordered region. Pro residues predominate over residues 274-285 (RSPPPPPPPEPS). The Fibronectin type-III domain maps to 312 to 399 (QAEARPLIKV…HNHTCLTICL (88 aa)). An LRR 6 repeat occupies 318-342 (LIKVKQLTQNSATITVQLPSPFHRM). The N-linked (GlcNAc...) asparagine glycan is linked to Asn376. Residues 419–439 (IMTILGCLFGMVLVLGAVYYC) form a helical membrane-spanning segment. The Cytoplasmic portion of the chain corresponds to 440-828 (LRRRRRQEEK…WKGVSAQHKS (389 aa)). The residue at position 461 (Ser461) is a Phosphoserine. 3 disordered regions span residues 517–552 (TPKA…QSSV), 624–649 (LQRH…VRSP), and 696–732 (KGRQ…GLGR). Over residues 529-541 (RTGDPPERRDCEL) the composition is skewed to basic and acidic residues. Low complexity predominate over residues 632 to 649 (AAGPPRASTSSSGSVRSP). At Ser645 the chain carries Phosphoserine. A compositionally biased stretch (basic and acidic residues) spans 696-705 (KGRQYGEHRH). Pro residues predominate over residues 713–727 (AEPPAPPGPPPPPPH).

As to quaternary structure, interacts with PPP1CA.

The protein localises to the membrane. The protein resides in the cell projection. It is found in the dendrite. In terms of biological role, postsynaptic protein that regulates circuit dynamics in the central nervous system by modulating the temporal dynamics of interneuron recruitment. Specifically present in excitatory synapses onto oriens-lacunosum molecular (OLM) interneurons and acts as a regulator of presynaptic release probability to direct the formation of highly facilitating pyramidal-OLM synapses. Inhibits phosphatase activity of protein phosphatase 1 (PP1) complexes. This Homo sapiens (Human) protein is Protein ELFN1 (ELFN1).